Consider the following 623-residue polypeptide: Sphingomyelinase C 2 (623 aa).

The N-terminal stretch at 1-25 (MINKITKPKLLIGYYLLLFSLIRCL) is a signal peptide. Composition is skewed to low complexity over residues 51-61 (VNSVSINNDPA) and 67-80 (NPAS…NAVP). Residues 51–121 (VNSVSINNDP…DPNPANLASA (71 aa)) form a disordered region. Positions 89–102 (NPVNPASANSNQVN) are enriched in polar residues. Positions 110–121 (PADPNPANLASA) are enriched in low complexity.

It localises to the secreted. It catalyses the reaction a sphingomyelin + H2O = phosphocholine + an N-acylsphing-4-enine + H(+). In Leptospira interrogans serogroup Icterohaemorrhagiae serovar Lai (strain 56601), this protein is Sphingomyelinase C 2 (sph2).